A 140-amino-acid chain; its full sequence is Phosphoribosyl-AMP cyclohydrolase (140 aa).

Residue Asp78 participates in Mg(2+) binding. Residue Cys79 coordinates Zn(2+). Mg(2+) contacts are provided by Asp80 and Asp82. Zn(2+) is bound by residues Cys96 and Cys103.

Belongs to the PRA-CH family. Homodimer. Mg(2+) serves as cofactor. The cofactor is Zn(2+).

It localises to the cytoplasm. The enzyme catalyses 1-(5-phospho-beta-D-ribosyl)-5'-AMP + H2O = 1-(5-phospho-beta-D-ribosyl)-5-[(5-phospho-beta-D-ribosylamino)methylideneamino]imidazole-4-carboxamide. The protein operates within amino-acid biosynthesis; L-histidine biosynthesis; L-histidine from 5-phospho-alpha-D-ribose 1-diphosphate: step 3/9. In terms of biological role, catalyzes the hydrolysis of the adenine ring of phosphoribosyl-AMP. This Ralstonia nicotianae (strain ATCC BAA-1114 / GMI1000) (Ralstonia solanacearum) protein is Phosphoribosyl-AMP cyclohydrolase.